Consider the following 438-residue polypeptide: 3-phosphoshikimate 1-carboxyvinyltransferase (438 aa).

The 3-phosphoshikimate site is built by Lys-25, Ser-26, and Arg-30. Lys-25 is a binding site for phosphoenolpyruvate. Residues Gly-99 and Arg-128 each contribute to the phosphoenolpyruvate site. 3-phosphoshikimate is bound by residues Ser-173, Gln-175, Asp-325, and Lys-352. Gln-175 is a binding site for phosphoenolpyruvate. Catalysis depends on Asp-325, which acts as the Proton acceptor. Arg-356 and Arg-398 together coordinate phosphoenolpyruvate.

It belongs to the EPSP synthase family. Monomer.

It localises to the cytoplasm. The enzyme catalyses 3-phosphoshikimate + phosphoenolpyruvate = 5-O-(1-carboxyvinyl)-3-phosphoshikimate + phosphate. The protein operates within metabolic intermediate biosynthesis; chorismate biosynthesis; chorismate from D-erythrose 4-phosphate and phosphoenolpyruvate: step 6/7. In terms of biological role, catalyzes the transfer of the enolpyruvyl moiety of phosphoenolpyruvate (PEP) to the 5-hydroxyl of shikimate-3-phosphate (S3P) to produce enolpyruvyl shikimate-3-phosphate and inorganic phosphate. The protein is 3-phosphoshikimate 1-carboxyvinyltransferase of Prochlorococcus marinus (strain MIT 9515).